The chain runs to 199 residues: MGLVMRFDLYLMFVMLMGLGFTISNGYKFYVGGKDGWVPTPSEDYSHWSHRNRFQVNDTLHFKYAKGKDSVLEVTEQEYNTCNTTHPLTSLSDGDSLFLLSHSGSYFFISGNSQNCLKGQKLAVKVLSTVHHSHSPRHTSPSPSPVHQELSSPGPSPGVEPSSDSNSRVPAPGPATAPNSAGLVGPGMVVLVIMISSLF.

The signal sequence occupies residues 1–23 (MGLVMRFDLYLMFVMLMGLGFTI). A Phytocyanin domain is found at 27–128 (YKFYVGGKDG…GQKLAVKVLS (102 aa)). N-linked (GlcNAc...) asparagine glycosylation is found at Asn-57 and Asn-83. Cys-82 and Cys-116 are joined by a disulfide. Residues 130-180 (VHHSHSPRHTSPSPSPVHQELSSPGPSPGVEPSSDSNSRVPAPGPATAPNS) form a disordered region. Positions 138 to 165 (HTSPSPSPVHQELSSPGPSPGVEPSSDS) are enriched in low complexity. A lipid anchor (GPI-anchor amidated asparagine) is attached at Asn-179. A propeptide spans 180-199 (SAGLVGPGMVVLVIMISSLF) (removed in mature form).

Belongs to the early nodulin-like (ENODL) family. In terms of tissue distribution, confined to flowers.

It is found in the cell membrane. Its function is as follows. May act as a carbohydrate transporter. In Arabidopsis thaliana (Mouse-ear cress), this protein is Early nodulin-like protein 3.